A 440-amino-acid polypeptide reads, in one-letter code: D-serine dehydratase (440 aa).

Lys116 carries the N6-(pyridoxal phosphate)lysine modification.

Belongs to the serine/threonine dehydratase family. DsdA subfamily. In terms of assembly, monomer. Pyridoxal 5'-phosphate serves as cofactor.

It carries out the reaction D-serine = pyruvate + NH4(+). The protein is D-serine dehydratase of Salmonella agona (strain SL483).